The sequence spans 205 residues: Photosystem I assembly protein Ycf4 (205 aa).

2 helical membrane-spanning segments follow: residues W23–I43 and L86–F106.

The protein belongs to the Ycf4 family.

It localises to the plastid. The protein localises to the chloroplast thylakoid membrane. Functionally, seems to be required for the assembly of the photosystem I complex. In Tetradesmus obliquus (Green alga), this protein is Photosystem I assembly protein Ycf4.